The sequence spans 165 residues: Nascent polypeptide-associated complex subunit alpha (165 aa).

The 65-residue stretch at 14–78 folds into the NAC-A/B domain; it reads NRNEKKAREL…AKVDNFTQRL (65 aa). The 40-residue stretch at 126–165 folds into the UBA domain; it reads LSNDDIDLVVQQTNATKGQAIKALKEHNGDIVNAIMSLSK.

The protein belongs to the NAC-alpha family. Part of the nascent polypeptide-associated complex (NAC), consisting of EGD2 and EGD1. NAC associates with ribosomes via EGD1.

The protein resides in the cytoplasm. It localises to the nucleus. Functionally, component of the nascent polypeptide-associated complex (NAC), a dynamic component of the ribosomal exit tunnel, protecting the emerging polypeptides from interaction with other cytoplasmic proteins to ensure appropriate nascent protein targeting. The NAC complex also promotes mitochondrial protein import by enhancing productive ribosome interactions with the outer mitochondrial membrane and blocks the inappropriate interaction of ribosomes translating non-secretory nascent polypeptides with translocation sites in the membrane of the endoplasmic reticulum. EGD2 may also be involved in transcription regulation. The chain is Nascent polypeptide-associated complex subunit alpha (EGD2) from Candida glabrata (strain ATCC 2001 / BCRC 20586 / JCM 3761 / NBRC 0622 / NRRL Y-65 / CBS 138) (Yeast).